A 138-amino-acid chain; its full sequence is uncharacterized protein (138 aa).

Residues 74–96 are disordered; it reads RRRSPSLPARRPPTPREDALEDY. A compositionally biased stretch (basic and acidic residues) spans 87 to 96; it reads TPREDALEDY.

This is an uncharacterized protein from Orgyia pseudotsugata (Douglas-fir tussock moth).